The primary structure comprises 260 residues: Triosephosphate isomerase (260 aa).

11 to 13 is a substrate binding site; the sequence is NWK. The active-site Electrophile is histidine 103. Residue glutamate 175 is the Proton acceptor of the active site. Substrate-binding positions include glycine 181, serine 220, and 241–242; that span reads GG.

It belongs to the triosephosphate isomerase family. As to quaternary structure, homodimer.

The protein localises to the cytoplasm. The catalysed reaction is D-glyceraldehyde 3-phosphate = dihydroxyacetone phosphate. The protein operates within carbohydrate biosynthesis; gluconeogenesis. It participates in carbohydrate degradation; glycolysis; D-glyceraldehyde 3-phosphate from glycerone phosphate: step 1/1. Functionally, involved in the gluconeogenesis. Catalyzes stereospecifically the conversion of dihydroxyacetone phosphate (DHAP) to D-glyceraldehyde-3-phosphate (G3P). In Shewanella sp. (strain W3-18-1), this protein is Triosephosphate isomerase.